A 56-amino-acid chain; its full sequence is Small ribosomal subunit protein uS14 (56 aa).

Residues Cys-21, Cys-24, Cys-39, and Cys-42 each contribute to the Zn(2+) site.

The protein belongs to the universal ribosomal protein uS14 family. Component of the 40S small ribosomal subunit. Requires Zn(2+) as cofactor.

The protein resides in the cytoplasm. It localises to the cytosol. It is found in the rough endoplasmic reticulum. The sequence is that of Small ribosomal subunit protein uS14 (RpS29) from Lysiphlebus testaceipes (Greenbugs aphid parastoid).